Consider the following 474-residue polypeptide: Phenolic acid decarboxylase (474 aa).

Mn(2+)-binding residues include Asn161, His182, and Glu224. Prenylated FMN-binding positions include 161–166 and 181–182; these read NVGTYR and MH. The active-site Proton donor is the Glu273.

Belongs to the UbiD family. YclC subfamily. It depends on prenylated FMN as a cofactor. Mn(2+) serves as cofactor.

It catalyses the reaction vanillate + H(+) = guaiacol + CO2. Involved in the non-oxidative decarboxylation and detoxification of phenolic derivatives under both aerobic and anaerobic conditions. Phenolic acid decarboxylase that catalyzes the reversible decarboxylation of vanillate. This Streptomyces sp. (strain D7) protein is Phenolic acid decarboxylase.